A 337-amino-acid chain; its full sequence is 1-aminocyclopropane-1-carboxylate deaminase (337 aa).

Lys-50 carries the post-translational modification N6-(pyridoxal phosphate)lysine. Ser-77 serves as the catalytic Nucleophile.

The protein belongs to the ACC deaminase/D-cysteine desulfhydrase family. In terms of assembly, homotrimer. Requires pyridoxal 5'-phosphate as cofactor.

The catalysed reaction is 1-aminocyclopropane-1-carboxylate + H2O = 2-oxobutanoate + NH4(+). Its function is as follows. Catalyzes a cyclopropane ring-opening reaction, the irreversible conversion of 1-aminocyclopropane-1-carboxylate (ACC) to ammonia and alpha-ketobutyrate. Allows growth on ACC as a nitrogen source. This is 1-aminocyclopropane-1-carboxylate deaminase from Rhizobium radiobacter (Agrobacterium tumefaciens).